The sequence spans 265 residues: H-2 class II histocompatibility antigen, A-Q beta chain (265 aa).

Residues 1–27 form the signal peptide; it reads MALQIPSLLLSAAVVVLMVLSSPRTEG. Residues 28 to 122 are beta-1; sequence GNSERHFVAQ…VETHTSLRRL (95 aa). Over 28 to 227 the chain is Extracellular; the sequence is GNSERHFVAQ…AQSESARSKM (200 aa). Cystine bridges form between Cys-42-Cys-106 and Cys-145-Cys-201. Asn-46 carries N-linked (GlcNAc...) asparagine glycosylation. The interval 123-217 is beta-2; sequence EQPNVAISLS…LKSPITVEWR (95 aa). The 89-residue stretch at 125–213 folds into the Ig-like C1-type domain; the sequence is PNVAISLSRT…EHPSLKSPIT (89 aa). The tract at residues 218-227 is connecting peptide; that stretch reads AQSESARSKM. A helical transmembrane segment spans residues 228-247; the sequence is LSGIGGCVLGVIFLGLGLFI. Residues 248–265 lie on the Cytoplasmic side of the membrane; sequence RHRSQKGPRGPPPAGLLQ.

The protein belongs to the MHC class II family. Ubiquitinated in immature dendritic cells leading to down-regulation of MHC class II.

It localises to the membrane. In Mus musculus (Mouse), this protein is H-2 class II histocompatibility antigen, A-Q beta chain (H2-Ab1).